Consider the following 2171-residue polypeptide: MLRALVQPATPAYQPLPSHLSAETESTCKGTVVHEAQLNHFYISPGGSNYGSPRPAHANMNANAAAGLAPEHIPTPGAALSWQAAIDAARQAKLMGSAGNATISTVSSTQRKRQQYGKPKKQGSTTATRPPRALLCLTLKNPIRRACISIVEWKPFEIIILLTIFANCVALAIYIPFPEDDSNATNSNLERVEYLFLIIFTVEAFLKVIAYGLLFHPNAYLRNGWNLLDFIIVVVGLFSAILEQATKADGANALGGKGAGFDVKALRAFRVLRPLRLVSGVPSLQVVLNSIIKAMVPLLHIALLVLFVIIIYAIIGLELFMGKMHKTCYNQEGVADVPAEDDPSPCALETGHGRQCQNGTVCKPGWDGPKHGITNFDNFAFAMLTVFQCITMEGWTDVLYWMQDAMGYELPWVYFVSLVIFGSFFVLNLVLGVLSGEFSKEREKAKARGDFQKLREKQQLEEDLKGYLDWITQAEDIDPENEDEGMDEEKPRNMSMPTSETESVNTENVAGGDIEGENCGARLAHRISKSKFSRYWRRWNRFCRRKCRAAVKSNVFYWLVIFLVFLNTLTIASEHYNQPHWLTEVQDTANKALLALFTAEMLLKMYSLGLQAYFVSLFNRFDCFIVCGGILETILVETKVMSPLGISVLRCVRLLRIFKITRYWNSLSNLVASLLNSVRSIASLLLLLFLFIIIFSLLGMQLFGGKFNFDEMQTRRSTFDNFPQSLLTVFQILTGEDWNSVMYDGIMAYGGPSFPGMLVCIYFIILFICGNYILLNVFLAIAVDNLADAESLTSAQKEEEEEKERKKLARTASPEKKQEVVGKPALEEAKEEKIELKSITADGESPPTTKINMDDLQPNESEDKSPYPNPETTGEEDEEEPEMPVGPRPRPLSELHLKEKAVPMPEASAFFIFSPNNRFRLQCHRIVNDTIFTNLILFFILLSSISLAAEDPVQHTSFRNHILFYFDIVFTTIFTIEIALKMTAYGAFLHKGSFCRNYFNILDLLVVSVSLISFGIQSSAINVVKILRVLRVLRPLRAINRAKGLKHVVQCVFVAIRTIGNIVIVTTLLQFMFACIGVQLFKGKLYTCSDSSKQTEAECKGNYITYKDGEVDHPIIQPRSWENSKFDFDNVLAAMMALFTVSTFEGWPELLYRSIDSHTEDKGPIYNYRVEISIFFIIYIIIIAFFMMNIFVGFVIVTFQEQGEQEYKNCELDKNQRQCVEYALKARPLRRYIPKNQHQYKVWYVVNSTYFEYLMFVLILLNTICLAMQHYGQSCLFKIAMNILNMLFTGLFTVEMILKLIAFKPKGYFSDPWNVFDFLIVIGSIIDVILSETNPAEHTQCSPSMNAEENSRISITFFRLFRVMRLVKLLSRGEGIRTLLWTFIKSFQALPYVALLIVMLFFIYAVIGMQVFGKIALNDTTEINRNNNFQTFPQAVLLLFRCATGEAWQDIMLACMPGKKCAPESEPHNSTEGETPCGSSFAVFYFISFYMLCAFLIINLFVAVIMDNFDYLTRDWSILGPHHLDEFKRIWAEYDPEAKGRIKHLDVVTLLRRIQPPLGFGKLCPHRVACKRLVSMNMPLNSDGTVMFNATLFALVRTALRIKTEGNLEQANEELRAIIKKIWKRTSMKLLDQVVPPAGDDEVTVGKFYATFLIQEYFRKFKKRKEQGLVGKPSQRNALSLQAGLRTLHDIGPEIRRAISGDLTAEEELDKAMKEAVSAASEDDIFRRAGGLFGNHVSYYQSDSRSAFPQTFTTQRPLHISKAGNNQGDTESPSHEKLVDSTFTPSSYSSTGSNANINNANNTALGRLPRPAGYPSTVSTVEGHGSPLSPAVRAQEAAWKLSSKRCHSQESQIAMACQEGASQDDNYDVRIGEDAECCSEPSLLSTEMLSYQDDENRQLAPPEEEKRDIRLSPKKGFLRSASLGRRASFHLECLKRQKNQGGDISQKTVLPLHLVHHQALAVAGLSPLLQRSHSPTSLPRPCATPPATPGSRGWPPQPIPTLRLEGADSSEKLNSSFPSIHCGSWSGENSPCRGDSSAARRARPVSLTVPSQAGAQGRQFHGSASSLVEAVLISEGLGQFAQDPKFIEVTTQELADACDLTIEEMENAADDILSGGARQSPNGTLLPFVNRRDPGRDRAGQNEQDASGACAPGCGQSEEALADRRAGVSSL.

Residues 1 to 154 (MLRALVQPAT…RACISIVEWK (154 aa)) lie on the Cytoplasmic side of the membrane. The segment at 77–98 (GAALSWQAAIDAARQAKLMGSA) is calmodulin-binding. The tract at residues 103 to 128 (ISTVSSTQRKRQQYGKPKKQGSTTAT) is disordered. Basic residues predominate over residues 110 to 121 (QRKRQQYGKPKK). Residues 141–438 (NPIRRACISI…LVLGVLSGEF (298 aa)) form an I repeat. The chain crosses the membrane as a helical span at residues 155-173 (PFEIIILLTIFANCVALAI). Over 174 to 188 (YIPFPEDDSNATNSN) the chain is Extracellular. N-linked (GlcNAc...) asparagine glycosylation is present at N183. Residues 189–209 (LERVEYLFLIIFTVEAFLKVI) traverse the membrane as a helical segment. Residues 210–218 (AYGLLFHPN) lie on the Cytoplasmic side of the membrane. A helical membrane pass occupies residues 219-239 (AYLRNGWNLLDFIIVVVGLFS). Topologically, residues 240 to 262 (AILEQATKADGANALGGKGAGFD) are extracellular. Residues 263 to 281 (VKALRAFRVLRPLRLVSGV) traverse the membrane as a helical segment. Over 282–298 (PSLQVVLNSIIKAMVPL) the chain is Cytoplasmic. A helical membrane pass occupies residues 299–320 (LHIALLVLFVIIIYAIIGLELF). Residues 321–380 (MGKMHKTCYNQEGVADVPAEDDPSPCALETGHGRQCQNGTVCKPGWDGPKHGITNFDNFA) are Extracellular-facing. Cystine bridges form between C328–C356 and C346–C362. A glycan (N-linked (GlcNAc...) asparagine) is linked at N358. Positions 381–402 (FAMLTVFQCITMEGWTDVLYWM) form an intramembrane region, pore-forming. A Selectivity filter of repeat I motif is present at residues 391 to 394 (TMEG). Residue E393 coordinates Ca(2+). The Extracellular segment spans residues 403-410 (QDAMGYEL). Residues 411-431 (PWVYFVSLVIFGSFFVLNLVL) traverse the membrane as a helical segment. The Cytoplasmic portion of the chain corresponds to 432–554 (GVLSGEFSKE…RKCRAAVKSN (123 aa)). Residues 458-475 (QQLEEDLKGYLDWITQAE) are AID/alpha-interaction domain; mediates interaction with the beta subunit. The interval 479–511 (PENEDEGMDEEKPRNMSMPTSETESVNTENVAG) is disordered. A compositionally biased stretch (polar residues) spans 495-508 (SMPTSETESVNTEN). S499 carries the phosphoserine modification. Phosphothreonine is present on T506. The stretch at 540 to 786 (NRFCRRKCRA…VFLAIAVDNL (247 aa)) is one II repeat. The chain crosses the membrane as a helical span at residues 555–573 (VFYWLVIFLVFLNTLTIAS). Over 574–584 (EHYNQPHWLTE) the chain is Extracellular. Residues 585 to 605 (VQDTANKALLALFTAEMLLKM) form a helical membrane-spanning segment. At 606–616 (YSLGLQAYFVS) the chain is on the cytoplasmic side. The chain crosses the membrane as a helical span at residues 617–636 (LFNRFDCFIVCGGILETILV). Residues 637-645 (ETKVMSPLG) lie on the Extracellular side of the membrane. Residues 646–664 (ISVLRCVRLLRIFKITRYW) form a helical membrane-spanning segment. Over 665 to 683 (NSLSNLVASLLNSVRSIAS) the chain is Cytoplasmic. Residues 684 to 703 (LLLLLFLFIIIFSLLGMQLF) form a helical membrane-spanning segment. At 704–723 (GGKFNFDEMQTRRSTFDNFP) the chain is on the extracellular side. Residues 724–745 (QSLLTVFQILTGEDWNSVMYDG) constitute an intramembrane region (pore-forming). The Selectivity filter of repeat II motif lies at 734-737 (TGED). E736 provides a ligand contact to Ca(2+). Residues 746-755 (IMAYGGPSFP) are Extracellular-facing. The helical transmembrane segment at 756 to 775 (GMLVCIYFIILFICGNYILL) threads the bilayer. Over 776 to 930 (NVFLAIAVDN…LQCHRIVNDT (155 aa)) the chain is Cytoplasmic. A disordered region spans residues 794–891 (SAQKEEEEEK…EMPVGPRPRP (98 aa)). The span at 813–836 (SPEKKQEVVGKPALEEAKEEKIEL) shows a compositional bias: basic and acidic residues. S838 and S845 each carry phosphoserine. An interaction with STAC2 region spans residues 859–906 (NESEDKSPYPNPETTGEEDEEEPEMPVGPRPRPLSELHLKEKAVPMPE). The segment covering 873-882 (TGEEDEEEPE) has biased composition (acidic residues). One copy of the III repeat lies at 917–1199 (NRFRLQCHRI…IFVGFVIVTF (283 aa)). The helical transmembrane segment at 931–949 (IFTNLILFFILLSSISLAA) threads the bilayer. Residues 950–961 (EDPVQHTSFRNH) lie on the Extracellular side of the membrane. Residues 962 to 981 (ILFYFDIVFTTIFTIEIALK) traverse the membrane as a helical segment. Residues 982–997 (MTAYGAFLHKGSFCRN) lie on the Cytoplasmic side of the membrane. Residues 998–1016 (YFNILDLLVVSVSLISFGI) traverse the membrane as a helical segment. The Extracellular segment spans residues 1017 to 1023 (QSSAINV). The chain crosses the membrane as a helical span at residues 1024–1042 (VKILRVLRVLRPLRAINRA). The Cytoplasmic portion of the chain corresponds to 1043-1061 (KGLKHVVQCVFVAIRTIGN). The chain crosses the membrane as a helical span at residues 1062-1081 (IVIVTTLLQFMFACIGVQLF). Residues 1082 to 1131 (KGKLYTCSDSSKQTEAECKGNYITYKDGEVDHPIIQPRSWENSKFDFDNV) are Extracellular-facing. A disulfide bridge links C1088 with C1099. Residues 1119–1208 (RSWENSKFDF…FQEQGEQEYK (90 aa)) form a dihydropyridine binding region. The pore-forming intramembrane region spans 1132–1152 (LAAMMALFTVSTFEGWPELLY). The short motif at 1143–1146 (TFEG) is the Selectivity filter of repeat III element. E1145 lines the Ca(2+) pocket. The Extracellular segment spans residues 1153-1169 (RSIDSHTEDKGPIYNYR). A helical membrane pass occupies residues 1170–1191 (VEISIFFIIYIIIIAFFMMNIF). Topologically, residues 1192 to 1249 (VGFVIVTFQEQGEQEYKNCELDKNQRQCVEYALKARPLRRYIPKNQHQYKVWYVVNST) are cytoplasmic. The stretch at 1236–1509 (NQHQYKVWYV…LFVAVIMDNF (274 aa)) is one IV repeat. A helical membrane pass occupies residues 1250–1271 (YFEYLMFVLILLNTICLAMQHY). At 1272 to 1279 (GQSCLFKI) the chain is on the extracellular side. The helical transmembrane segment at 1280–1301 (AMNILNMLFTGLFTVEMILKLI) threads the bilayer. At 1302 to 1311 (AFKPKGYFSD) the chain is on the cytoplasmic side. Residues 1312–1331 (PWNVFDFLIVIGSIIDVILS) traverse the membrane as a helical segment. Over 1332-1354 (ETNPAEHTQCSPSMNAEENSRIS) the chain is Extracellular. The helical transmembrane segment at 1355-1373 (ITFFRLFRVMRLVKLLSRG) threads the bilayer. Residues 1374–1391 (EGIRTLLWTFIKSFQALP) lie on the Cytoplasmic side of the membrane. Residues 1392 to 1412 (YVALLIVMLFFIYAVIGMQVF) traverse the membrane as a helical segment. At 1413–1434 (GKIALNDTTEINRNNNFQTFPQ) the chain is on the extracellular side. Residue N1418 is glycosylated (N-linked (GlcNAc...) asparagine). An intramembrane region (pore-forming) is located at residues 1435-1453 (AVLLLFRCATGEAWQDIML). The Selectivity filter of repeat IV motif lies at 1444–1447 (TGEA). At 1454 to 1481 (ACMPGKKCAPESEPHNSTEGETPCGSSF) the chain is on the extracellular side. The segment at 1460-1528 (KCAPESEPHN…LGPHHLDEFK (69 aa)) is dihydropyridine binding. C1461 and C1477 are disulfide-bonded. An N-linked (GlcNAc...) asparagine glycan is attached at N1469. Residues 1474–1516 (ETPCGSSFAVFYFISFYMLCAFLIINLFVAVIMDNFDYLTRDW) form a phenylalkylamine binding region. The chain crosses the membrane as a helical span at residues 1482–1506 (AVFYFISFYMLCAFLIINLFVAVIM). Residues 1507–2171 (DNFDYLTRDW…ADRRAGVSSL (665 aa)) lie on the Cytoplasmic side of the membrane. The interval 1641-1668 (DEVTVGKFYATFLIQEYFRKFKKRKEQG) is important for interaction with STAC1, STAC2 and STAC3. Residues 1647-1667 (KFYATFLIQEYFRKFKKRKEQ) are calmodulin-binding IQ region. The tract at residues 1681–1700 (LQAGLRTLHDIGPEIRRAIS) is important for localization in at the junctional membrane. S1700 and S1721 each carry phosphoserine. Residues 1760-1797 (ISKAGNNQGDTESPSHEKLVDSTFTPSSYSSTGSNANI) are disordered. Residues 1781–1793 (STFTPSSYSSTGS) are compositionally biased toward polar residues. A Phosphoserine; by PKA modification is found at S1928. Disordered regions lie at residues 1971-2014 (RSHS…EKLN), 2026-2060 (SGEN…GRQF), and 2114-2155 (SGGA…PGCG). A compositionally biased stretch (basic and acidic residues) spans 2130 to 2140 (NRRDPGRDRAG).

It belongs to the calcium channel alpha-1 subunit (TC 1.A.1.11) family. CACNA1C subfamily. As to quaternary structure, component of a calcium channel complex consisting of a pore-forming alpha subunit (CACNA1C) and ancillary beta, gamma and delta subunits. The channel complex contains alpha, beta, gamma and delta subunits in a 1:1:1:1 ratio, i.e. it contains only one of each type of subunit. CACNA1C channel activity is modulated by ancillary subunits, such as CACNB1, CACNB2, CACNB3, CACNA2D1 and CACNA2D4. Interacts with CACNB1. Interacts with CACNB2. Identified in a complex with CACNA2D4 and CACNB3. Interacts with CACNB3. Interacts with CACNA2D1. Interacts with the gamma subunits CACNG4, CACNG6, CACNG7 and CACNG8. Interacts with CACNA2D4. Interacts with CALM1. Interacts (via the N-terminus and the C-terminal C and IQ motifs) with CABP1; this inhibits Ca(2+)-dependent channel inactivation. The binding via the C motif is calcium independent whereas the binding via IQ requires the presence of calcium and is mutually exclusive with calmodulin binding. The binding to the cytoplasmic N-terminal domain is calcium independent but is essential for the channel modulation. Interacts (via C-terminal CDB motif) with CABP5; in a calcium-dependent manner. Interacts with CIB1; the interaction increases upon cardiomyocytes hypertrophy. Interacts with STAC1, STAC2 and STAC3; this inhibits channel inactivation, probably by hindering CALM1 binding. Phosphorylation by PKA at Ser-1928 activates the channel. Elevated levels of blood glucose lead to increased phosphorylation by PKA. Expression in cardiac muscle. In lung, expressed in airway and vascular smooth muscle cells.

Its subcellular location is the cell membrane. It is found in the sarcolemma. It localises to the perikaryon. The protein resides in the postsynaptic density membrane. The protein localises to the cell projection. Its subcellular location is the dendrite. It is found in the T-tubule. It carries out the reaction Ca(2+)(in) = Ca(2+)(out). Its activity is regulated as follows. Inhibited by dihydropyridines (DHP), such as isradipine. Inhibited by nifedipine. Channel activity is regulated by Ca(2+) and calmodulin. Binding of STAC1, STAC2 or STAC3 to a region that overlaps with the calmodulin binding site inhibits channel inactivation by Ca(2+) and calmodulin. Binding of calmodulin or CABP1 at the same regulatory sites results in opposite effects on the channel function. Shear stress and pressure increases calcium channel activity. Pore-forming, alpha-1C subunit of the voltage-gated calcium channel that gives rise to L-type calcium currents. Mediates influx of calcium ions into the cytoplasm, and thereby triggers calcium release from the sarcoplasm. Plays an important role in excitation-contraction coupling in the heart. Required for normal heart development and normal regulation of heart rhythm. Required for normal contraction of smooth muscle cells in blood vessels and in the intestine. Essential for normal blood pressure regulation via its role in the contraction of arterial smooth muscle cells. Long-lasting (L-type) calcium channels belong to the 'high-voltage activated' (HVA) group. The polypeptide is Voltage-dependent L-type calcium channel subunit alpha-1C (CACNA1C) (Oryctolagus cuniculus (Rabbit)).